We begin with the raw amino-acid sequence, 64 residues long: Ribosome biogenesis protein Nop10 (64 aa).

This sequence belongs to the NOP10 family.

Its function is as follows. Involved in ribosome biogenesis; more specifically in 18S rRNA pseudouridylation and in cleavage of pre-rRNA. The protein is Ribosome biogenesis protein Nop10 of Ignicoccus hospitalis (strain KIN4/I / DSM 18386 / JCM 14125).